The chain runs to 101 residues: Large ribosomal subunit protein bL28 (101 aa).

This sequence belongs to the bacterial ribosomal protein bL28 family.

This Rhodopseudomonas palustris (strain BisB18) protein is Large ribosomal subunit protein bL28.